An 876-amino-acid polypeptide reads, in one-letter code: ATP-dependent helicase Lhr-Core (876 aa).

ATP-binding residues include Q37, K60, T61, D175, E176, R374, and H377. One can recognise a Helicase ATP-binding domain in the interval 41–232; it reads IPLIKKGKNV…FLVGGNGDYE (192 aa). Positions 175–178 match the DEAH box motif; that stretch reads DEIH. One can recognise a Helicase C-terminal domain in the interval 249-421; sequence PVKDLVHATE…NIHVPENPLD (173 aa). The segment at 422 to 506 is WH domain; it reads VLTQLIVAAS…IFFLNSGTIP (85 aa). The interval 507-876 is domain 4; sequence DEAMIPVKME…DLEYTEAGIK (370 aa).

The protein belongs to the Lhr helicase family. Lhr-Core subfamily. In terms of assembly, monomer.

The catalysed reaction is Couples ATP hydrolysis with the unwinding of duplex DNA by translocating in the 3'-5' direction.. It catalyses the reaction ATP + H2O = ADP + phosphate + H(+). Probably part of a 4-gene DNA damage response locus in which the upstream ups system, in combination with this downstream locus, functions in homologous recombination to rescue Sulfolobales from DNA-damaging threats. DNA helicase that translocates in a 3'-5' direction on single-stranded (ss)DNA. Binds Holliday junction (HJ) DNA, Y-shaped DNA, DNA with a 3'-overhang and single-stranded (ss)DNA with high affinity; binds double-stranded (ds)DNA with less affinity. Has helicase activity on DNA with a 3'-overhang, Y-shaped DNA and HJ DNA. Does not unwind blunt-ended dsDNA or DNA with a 5'-overhang. The polypeptide is ATP-dependent helicase Lhr-Core (Sulfolobus acidocaldarius (strain ATCC 33909 / DSM 639 / JCM 8929 / NBRC 15157 / NCIMB 11770)).